The chain runs to 144 residues: Maximins 3/H14 (144 aa).

Residues 1 to 18 (MNFKYIVAVSFLIASAYA) form the signal peptide. Propeptides lie at residues 19 to 43 (RSVQ…REIR) and 73 to 122 (RTAE…KKEK). Ile143 is subject to Isoleucine amide.

The protein belongs to the bombinin family. In terms of tissue distribution, expressed by the skin glands.

The protein resides in the secreted. Maximin-3 shows antibacterial activity against both Gram-positive and Gram-negative bacteria. It also shows antimicrobial activity against the fungus C.albicans, but not against A.flavus nor P.uticale. It has little hemolytic activity. It possess a significant cytotoxicity against tumor cell lines. It possess a significant anti-HIV activity. It shows high spermicidal activity. In terms of biological role, maximin-H14 shows antimicrobial activity against bacteria and against the fungus C.albicans. Shows strong hemolytic activity. This Bombina maxima (Giant fire-bellied toad) protein is Maximins 3/H14.